The primary structure comprises 602 residues: Glutamine--fructose-6-phosphate aminotransferase [isomerizing] (602 aa).

The Nucleophile; for GATase activity role is filled by C2. Residues 2–219 (CGIIGYIGDR…DGEYAILTKD (218 aa)) form the Glutamine amidotransferase type-2 domain. 2 consecutive SIS domains span residues 280–420 (VAEE…VLGT) and 453–592 (LAET…PDKP). The For Fru-6P isomerization activity role is filled by K597.

In terms of assembly, homodimer.

The protein localises to the cytoplasm. The catalysed reaction is D-fructose 6-phosphate + L-glutamine = D-glucosamine 6-phosphate + L-glutamate. Its function is as follows. Catalyzes the first step in hexosamine metabolism, converting fructose-6P into glucosamine-6P using glutamine as a nitrogen source. The polypeptide is Glutamine--fructose-6-phosphate aminotransferase [isomerizing] (Thermococcus kodakarensis (strain ATCC BAA-918 / JCM 12380 / KOD1) (Pyrococcus kodakaraensis (strain KOD1))).